Reading from the N-terminus, the 152-residue chain is Deoxyuridine 5'-triphosphate nucleotidohydrolase (152 aa).

Substrate contacts are provided by residues 72-74 (RSG), N85, and 89-91 (TID).

The protein belongs to the dUTPase family. Mg(2+) is required as a cofactor.

It carries out the reaction dUTP + H2O = dUMP + diphosphate + H(+). Its pathway is pyrimidine metabolism; dUMP biosynthesis; dUMP from dCTP (dUTP route): step 2/2. In terms of biological role, this enzyme is involved in nucleotide metabolism: it produces dUMP, the immediate precursor of thymidine nucleotides and it decreases the intracellular concentration of dUTP so that uracil cannot be incorporated into DNA. This is Deoxyuridine 5'-triphosphate nucleotidohydrolase from Afipia carboxidovorans (strain ATCC 49405 / DSM 1227 / KCTC 32145 / OM5) (Oligotropha carboxidovorans).